A 1217-amino-acid chain; its full sequence is Genetic suppressor element 1 (1217 aa).

Positions Met-1–Arg-155 are disordered. A Phosphoserine modification is found at Ser-10. Residues Met-15–Pro-33 show a composition bias toward polar residues. Low complexity-rich tracts occupy residues Ser-43 to Ala-63 and Gly-76 to Pro-89. Ser-84 and Ser-95 each carry phosphoserine. A compositionally biased stretch (low complexity) spans Val-103–Gly-114. Asymmetric dimethylarginine is present on Arg-305. A coiled-coil region spans residues Glu-321–Ala-403. Disordered regions lie at residues Ser-324–Leu-385 and Arg-418–Val-465. Residues Leu-331–Leu-385 are compositionally biased toward basic and acidic residues. Residue Thr-433 is modified to Phosphothreonine. Residues Pro-450 to Val-465 show a composition bias toward low complexity. Lys-496 carries the N6-acetyllysine modification. 3 disordered regions span residues His-526–Ala-579, Lys-633–Leu-675, and Phe-699–Pro-720. 2 stretches are compositionally biased toward basic and acidic residues: residues Asn-551–Pro-561 and Lys-633–Pro-645. Residues Pro-711–Pro-720 show a composition bias toward pro residues. N6-acetyllysine is present on Lys-739. Ser-766 is subject to Phosphoserine. Disordered regions lie at residues Lys-807–Pro-858, Ala-903–Val-930, Glu-948–Gly-981, and Leu-1068–Lys-1122. Over residues Gln-813–Leu-822 the composition is skewed to basic residues. Phosphoserine is present on residues Ser-826 and Ser-828. 2 stretches are compositionally biased toward polar residues: residues Thr-831–Ser-840 and Thr-847–Pro-858. Ser-857 is subject to Phosphoserine. Thr-907 is modified (phosphothreonine). Ser-909 bears the Phosphoserine mark. A compositionally biased stretch (polar residues) spans Leu-1068 to Pro-1085. A compositionally biased stretch (acidic residues) spans Arg-1099–Glu-1117. At Ser-1101 the chain carries Phosphoserine. Residues Glu-1127–Ala-1201 are a coiled coil.

May be a component of a BHC histone deacetylase complex that contains HDAC1, HDAC2, HMG20B/BRAF35, KDM1A, RCOR1/CoREST, PHF21A/BHC80, ZMYM2, ZNF217, ZMYM3, GSE1 and GTF2I.

This is Genetic suppressor element 1 (GSE1) from Homo sapiens (Human).